A 186-amino-acid chain; its full sequence is Elongation factor P (186 aa).

It belongs to the elongation factor P family.

The protein localises to the cytoplasm. Its pathway is protein biosynthesis; polypeptide chain elongation. Functionally, involved in peptide bond synthesis. Stimulates efficient translation and peptide-bond synthesis on native or reconstituted 70S ribosomes in vitro. Probably functions indirectly by altering the affinity of the ribosome for aminoacyl-tRNA, thus increasing their reactivity as acceptors for peptidyl transferase. The polypeptide is Elongation factor P (Crocosphaera subtropica (strain ATCC 51142 / BH68) (Cyanothece sp. (strain ATCC 51142))).